A 308-amino-acid chain; its full sequence is UPF0282 protein STK_23220 (308 aa).

It belongs to the UPF0282 family.

In Sulfurisphaera tokodaii (strain DSM 16993 / JCM 10545 / NBRC 100140 / 7) (Sulfolobus tokodaii), this protein is UPF0282 protein STK_23220.